The primary structure comprises 504 residues: Maturase K (504 aa).

Belongs to the intron maturase 2 family. MatK subfamily.

The protein resides in the plastid. Its subcellular location is the chloroplast. Usually encoded in the trnK tRNA gene intron. Probably assists in splicing its own and other chloroplast group II introns. The polypeptide is Maturase K (Matthiola incana (Common stock)).